The sequence spans 287 residues: Uricase (287 aa).

Residues lysine 11 and threonine 58 each act as charge relay system in the active site. Residues threonine 58, aspartate 59, phenylalanine 160, arginine 177, valine 219, glutamine 220, and asparagine 246 each coordinate urate. The active-site Charge relay system is histidine 248. The Microbody targeting signal motif lies at 285 to 287 (SRL).

It belongs to the uricase family.

Its subcellular location is the peroxisome. It catalyses the reaction urate + O2 + H2O = 5-hydroxyisourate + H2O2. Its pathway is purine metabolism; urate degradation; (S)-allantoin from urate: step 1/3. In terms of biological role, catalyzes the oxidation of uric acid to 5-hydroxyisourate, which is further processed to form (S)-allantoin. The chain is Uricase (uox) from Dictyostelium discoideum (Social amoeba).